A 1087-amino-acid polypeptide reads, in one-letter code: Alpha-mannosidase G (1087 aa).

His-264, Asp-266, Asp-376, and His-579 together coordinate Zn(2+). The active-site Nucleophile is Asp-376.

Belongs to the glycosyl hydrolase 38 family. Zn(2+) serves as cofactor.

It catalyses the reaction Hydrolysis of terminal, non-reducing alpha-D-mannose residues in alpha-D-mannosides.. The polypeptide is Alpha-mannosidase G (manG) (Dictyostelium discoideum (Social amoeba)).